Reading from the N-terminus, the 366-residue chain is RNA 3'-terminal phosphate cyclase (366 aa).

Positions 104, 131, 294, 297, 298, and 320 each coordinate ATP. Residue histidine 320 is the Tele-AMP-histidine intermediate of the active site.

The protein belongs to the RNA 3'-terminal cyclase family. Type 1 subfamily.

It localises to the nucleus. The protein localises to the nucleoplasm. The enzyme catalyses a 3'-end 3'-phospho-ribonucleotide-RNA + ATP = a 3'-end 2',3'-cyclophospho-ribonucleotide-RNA + AMP + diphosphate. Catalyzes the conversion of 3'-phosphate to a 2',3'-cyclic phosphodiester at the end of RNA. The mechanism of action of the enzyme occurs in 3 steps: (A) adenylation of the enzyme by ATP; (B) transfer of adenylate to an RNA-N3'P to produce RNA-N3'PP5'A; (C) and attack of the adjacent 2'-hydroxyl on the 3'-phosphorus in the diester linkage to produce the cyclic end product. Likely functions in some aspects of cellular RNA processing. Function plays an important role in regulating axon regeneration by inhibiting central nervous system (CNS) axon regeneration following optic nerve injury. The sequence is that of RNA 3'-terminal phosphate cyclase (RTCA) from Bos taurus (Bovine).